A 661-amino-acid polypeptide reads, in one-letter code: MPLPSRASSTPKISKACVPCRTRKIKCNAAVVGLPCGSCVSRECPDDCVLSARKRRTVKVRNAEAPRSRKNIPDTNGSVLSPRQQQLPTNVSRQTTDSSHSDPVEESIHASHTGSSLRNDTPHSRDRRPPGQAQADLLYLNILQDTVNDTSAAQTDASDHQSNDEPDDSFNSQIHHWNPPPQLDDVDNEYLAKKKVFELPPPRFMDDIVKAYFDYVHPFAPILNRTDFIQSYRLGTCCLFLLHAVAAAASLYVTHDVLLGCGYPDRSTAQASFFSKAKLFHDFHCQGDPLSMLQGSMILGAIILDHPSDRDFQYWFHNSVRRASKMGVQNACLRDDGSQKLYRRIWWVLHNRDIFHFFINTQNMRLLANAPPIRPLTEADWETEDIEQWSGILSPISQAQKVSLIAQCELAQIFGNVMSVVTSSTPSAEEIHKRILPLDAWRTSLPDRMQLMASFADGEIYHLEALTTSYRFECIMCRLLRRGRWQMSDGGLREWAQQRFRSAIFELDTIVKRVMINNTIQKLPTTFITTITALLALHIESALDAAESSLIRSMARISVQHTMLALDQIRDTPAIKRALPAFEIVLSKNKLYPTSSSDTEQINTMQAISQDQTLNDGHILQPAQADMTLPQDDQSFLYGDFIGFDFLDRWQMEQLDFTGIY.

The segment at residues 17 to 48 (CVPCRTRKIKCNAAVVGLPCGSCVSRECPDDC) is a DNA-binding region (zn(2)-C6 fungal-type). Disordered stretches follow at residues 57–131 (TVKV…RPPG) and 151–184 (SAAQTDASDHQSNDEPDDSFNSQIHHWNPPPQLD). Over residues 73 to 98 (PDTNGSVLSPRQQQLPTNVSRQTTDS) the composition is skewed to polar residues. Residues 99–109 (SHSDPVEESIH) show a composition bias toward basic and acidic residues. Over residues 110-119 (ASHTGSSLRN) the composition is skewed to polar residues. Basic and acidic residues predominate over residues 120 to 129 (DTPHSRDRRP).

It localises to the nucleus. Efflux pump involved in export of biosynthesis of fusaric acid, a mycotoxin with low to moderate toxicity to animals and humans, but with high phytotoxic properties. Constitutes a self-protecting mechanism of the fungus against critical levels of FSA within the cell. The polypeptide is Fusaric acid cluster transcription factor FUB12 (Fusarium oxysporum f. sp. lycopersici (strain 4287 / CBS 123668 / FGSC 9935 / NRRL 34936) (Fusarium vascular wilt of tomato)).